An 84-amino-acid chain; its full sequence is Large ribosomal subunit protein bL27 (84 aa).

A disordered region spans residues 1 to 21 (MAHKKGGGSTKNGRDSNPKYL).

Belongs to the bacterial ribosomal protein bL27 family.

The protein is Large ribosomal subunit protein bL27 of Pelodictyon phaeoclathratiforme (strain DSM 5477 / BU-1).